Here is a 153-residue protein sequence, read N- to C-terminus: Glucose-6-phosphate 1-dehydrogenase (153 aa).

NADP(+) contacts are provided by arginine 21 and lysine 120. D-glucose 6-phosphate is bound at residue lysine 120.

Belongs to the glucose-6-phosphate dehydrogenase family.

The protein resides in the cytoplasm. It localises to the cytosol. It carries out the reaction D-glucose 6-phosphate + NADP(+) = 6-phospho-D-glucono-1,5-lactone + NADPH + H(+). Its pathway is carbohydrate degradation; pentose phosphate pathway; D-ribulose 5-phosphate from D-glucose 6-phosphate (oxidative stage): step 1/3. In terms of biological role, cytosolic glucose-6-phosphate dehydrogenase that catalyzes the first and rate-limiting step of the oxidative branch within the pentose phosphate pathway/shunt, an alternative route to glycolysis for the dissimilation of carbohydrates and a major source of reducing power and metabolic intermediates for fatty acid and nucleic acid biosynthetic processes. The sequence is that of Glucose-6-phosphate 1-dehydrogenase (ZW) from Sarcophaga bullata (Grey flesh fly).